Reading from the N-terminus, the 156-residue chain is Ribosome maturation factor RimP (156 aa).

Belongs to the RimP family.

The protein resides in the cytoplasm. Its function is as follows. Required for maturation of 30S ribosomal subunits. The chain is Ribosome maturation factor RimP from Shouchella clausii (strain KSM-K16) (Alkalihalobacillus clausii).